We begin with the raw amino-acid sequence, 187 residues long: Reactive Intermediate Deaminase A, chloroplastic (187 aa).

The transit peptide at 1–58 (MTWSVFRSINTPTLDLSTALRSTRTPLVAAGVGCATFAGVSLFRMSSRSPPFASLSVS) directs the protein to the chloroplast. Residue arginine 165 participates in substrate binding.

It belongs to the RutC family. Expressed in leaves, petiols, petals, carpels and shoot apex.

It localises to the plastid. It is found in the chloroplast. It carries out the reaction 2-iminobutanoate + H2O = 2-oxobutanoate + NH4(+). It catalyses the reaction 2-iminopropanoate + H2O = pyruvate + NH4(+). Its pathway is amino-acid biosynthesis; L-isoleucine biosynthesis; 2-oxobutanoate from L-threonine. Functionally, hydrolyzes the Ser-derived enamine/imine product of Thr dehydratase, protecting the plastidial branched-chain aminotransferase BCAT3 (AC Q9M401) from inactivation. Involved in Ile biosynthesis. The chain is Reactive Intermediate Deaminase A, chloroplastic from Arabidopsis thaliana (Mouse-ear cress).